Here is a 184-residue protein sequence, read N- to C-terminus: Ribosome-recycling factor (184 aa).

It belongs to the RRF family.

The protein localises to the cytoplasm. Its function is as follows. Responsible for the release of ribosomes from messenger RNA at the termination of protein biosynthesis. May increase the efficiency of translation by recycling ribosomes from one round of translation to another. The chain is Ribosome-recycling factor from Borreliella afzelii (strain PKo) (Borrelia afzelii).